The chain runs to 263 residues: Putative ankyrin repeat domain-containing protein 20A12 pseudogene (263 aa).

Coiled coils occupy residues 65 to 121 (KKDL…MLES) and 171 to 263 (NQVF…IQLH).

This Homo sapiens (Human) protein is Putative ankyrin repeat domain-containing protein 20A12 pseudogene.